The sequence spans 228 residues: MTLDANDKLLEAVLQEYKILAEYERLQSEDLGGIYVTPSYENPFLWFGVIFVRSGMYKDGVFRFTISLPNRFPNDSTVPVVAFQSDVFHPMVNPSDGVLNLSDTFPKWQSGDSHIWQMLKFVQFILQNLDDHTIPSEHVVNNEAYQLLMENRAEFLLRVEQCVEDSQRKLYDLPAQPDRFYICFDRFNPDVHGPVLQSMKEDKPTEVTTPPSSGLSWVRKGFYQPLSK.

Residues 14–168 enclose the UBC core domain; sequence LQEYKILAEY…VEQCVEDSQR (155 aa).

It belongs to the ubiquitin-conjugating enzyme family. FTS subfamily.

The sequence is that of Protein crossbronx homolog from Anopheles gambiae (African malaria mosquito).